The sequence spans 456 residues: Yersinopine synthase (456 aa).

Residues alanine 12–alanine 15, asparagine 35–lysine 40, and threonine 154 each bind NADP(+). The Proton donor/acceptor role is filled by histidine 242.

Belongs to the staphylopine dehydrogenase family. As to quaternary structure, homodimer.

The enzyme catalyses yersinopine + NADP(+) + H2O = (2S)-2-amino-4-{[(1S)-1-carboxy-2-(1H-imidazol-4-yl)ethyl]amino}butanoate + pyruvate + NADPH + H(+). Its function is as follows. Catalyzes the NADPH-dependent reductive condensation of pyruvate to the intermediate formed by the adjacently encoded enzyme y2836, namely (2S)-2-amino-4-{[(1S)-1-carboxy-2-(1H-imidazol-4-yl)ethyl]amino}butanoate, leading to the production of yersinopine. This is the last step in the biosynthesis of the metallophore yersinopine, which is involved in metal acquisition and thus enables bacterial growth inside the host, where metal access is limited. Therefore, this enzyme probably contributes to Yersinia virulence. Cannot use alpha-ketoglutarate in place of pyruvate, and displays only poor efficiency with oxaloacetate and glyoxylate. This is Yersinopine synthase from Yersinia pestis.